Reading from the N-terminus, the 640-residue chain is Choline O-acetyltransferase (640 aa).

Positions 1–22 are enriched in basic and acidic residues; that stretch reads MPDLEKDMQKKEKDSRSKDEPA. The tract at residues 1 to 28 is disordered; the sequence is MPDLEKDMQKKEKDSRSKDEPAVPKLPV. Catalysis depends on histidine 334, which acts as the Proton acceptor. CoA contacts are provided by residues 412–424, serine 450, and glutamine 551; that span reads GKEF…TSPD.

Belongs to the carnitine/choline acetyltransferase family. As to expression, detected in brain and in embryonic retina.

It catalyses the reaction choline + acetyl-CoA = acetylcholine + CoA. Its function is as follows. Catalyzes the reversible synthesis of acetylcholine (ACh) from acetyl CoA and choline at cholinergic synapses. The sequence is that of Choline O-acetyltransferase (CHAT) from Gallus gallus (Chicken).